Here is a 103-residue protein sequence, read N- to C-terminus: Large ribosomal subunit protein uL24 (103 aa).

It belongs to the universal ribosomal protein uL24 family. As to quaternary structure, part of the 50S ribosomal subunit.

One of two assembly initiator proteins, it binds directly to the 5'-end of the 23S rRNA, where it nucleates assembly of the 50S subunit. Its function is as follows. One of the proteins that surrounds the polypeptide exit tunnel on the outside of the subunit. This chain is Large ribosomal subunit protein uL24, found in Bacillus cytotoxicus (strain DSM 22905 / CIP 110041 / 391-98 / NVH 391-98).